A 481-amino-acid chain; its full sequence is Argininosuccinate lyase (481 aa).

Belongs to the lyase 1 family. Argininosuccinate lyase subfamily.

The protein resides in the cytoplasm. It carries out the reaction 2-(N(omega)-L-arginino)succinate = fumarate + L-arginine. It functions in the pathway amino-acid biosynthesis; L-arginine biosynthesis; L-arginine from L-ornithine and carbamoyl phosphate: step 3/3. The protein is Argininosuccinate lyase of Methanococcus vannielii (strain ATCC 35089 / DSM 1224 / JCM 13029 / OCM 148 / SB).